The chain runs to 373 residues: 2-phosphonomethylmalate synthase (373 aa).

A Pyruvate carboxyltransferase domain is found at 5–256 (LVLEDTTLRD…DLGIDLTKLK (252 aa)).

Belongs to the alpha-IPM synthase/homocitrate synthase family.

It catalyses the reaction 3-phosphonopyruvate + acetyl-CoA + H2O = (R)-2-(phosphonomethyl)malate + CoA + H(+). Its pathway is antibiotic biosynthesis. Acyltransferase involved in the biosynthesis of the phosphonate antibiotic FR-900098, a potent antimalarial agent that acts as an inhibitor of 1-deoxy-D-xylulose 5-phosphate reductoisomerase (DXR), the first enzyme in the nonmevalonate pathway for isoprenoid biosynthesis. Catalyzes the condensation between acetyl-CoA and phosphonopyruvate to yield (R)-2-(phosphonomethyl)malate. The chain is 2-phosphonomethylmalate synthase from Streptomyces rubellomurinus (strain ATCC 31215).